Here is an 817-residue protein sequence, read N- to C-terminus: Neurabin-2 (817 aa).

Disordered stretches follow at residues 1–52 and 64–163; these read MMKT…KYGS and MGTT…GGDK. 2 actin-binding regions span residues 1-154 and 164-282; these read MMKT…FERS and EAVA…QHRV. Position 15 is a phosphoserine; by MAPK1 (Ser15). Ser17 is subject to Phosphoserine; by CDK5. Ser94 bears the Phosphoserine; by PKA mark. Residues Ser100 and Ser116 each carry the phosphoserine modification. The segment at 100-371 is interaction with D(2) dopamine receptor; the sequence is SLNENVDHSA…LERGVDNGRA (272 aa). A compositionally biased stretch (pro residues) spans 131 to 141; that stretch reads SAQPAPPPHPP. Positions 169–255 are interaction with ADRA2A, ADRA2B and ADRA2C; sequence RLLRQERAGL…KRSRVFQPPP (87 aa). Ser192 is subject to Phosphoserine. Thr193 bears the Phosphothreonine mark. Phosphoserine; by MAPK1 is present on Ser205. The residue at position 207 (Thr207) is a Phosphothreonine. A disordered region spans residues 216–451; that stretch reads EKADSRTGLH…DPAPSRKIHF (236 aa). Residues 290–301 show a composition bias toward basic and acidic residues; it reads KPREVRKIKPVE. Composition is skewed to low complexity over residues 332–341 and 399–409; these read STPATTASPA and SGLGEDSGGSA. A compositionally biased stretch (acidic residues) spans 410-425; sequence LEEDDEEDEEDGEPPY. The segment at 417–494 is interaction with protein phosphatase 1; the sequence is DEEDGEPPYE…LEKRVERLEL (78 aa). Ser438 bears the Phosphoserine mark. Positions 447–451 match the PP1-binding motif motif; sequence RKIHF. The segment at 480–525 is interaction with RGS2; the sequence is SAEYELEKRVERLELFPVELEKDSEGLGISIIGMGAGADMGLEKLG. Residues 496 to 584 form the PDZ domain; that stretch reads PVELEKDSEG…RVRFMIGRER (89 aa). The stretch at 595-616 forms a coiled coil; it reads IQQTLEQERWQREMMEQRYAQY. Residues 595-816 form an interaction with TGN38 region; the sequence is IQQTLEQERW…NLQTLRNSNS (222 aa). The residue at position 658 (Ser658) is a Phosphoserine. A coiled-coil region spans residues 665 to 816; it reads EKLVHKFKEL…NLQTLRNSNS (152 aa).

As to quaternary structure, possibly exists as a homodimer, homotrimer or a homotetramer. Interacts with F-actin, PPP1CA, neurabin-1, TGN38 and D(2) dopamine receptor. Interacts with RGS1, RGS2, RGS4, RGS19 and ADRA1B, ADRA2A, ADRA2B, ADRA2C, CDKN2A, PPP1R2, RASGFR1 and TIAM1. Interacts (via C-terminus) with SPATA13 (via C-terminal tail). Interacts with DCLK2. Interacts with ADRA2B. Stimulation of D1 (but not D2) dopamine receptors induces Ser-94 phosphorylation. Dephosphorylation of Ser-94 is mediated mainly by PP1 and to a lesser extent by PP2A. Phosphorylation of spinophilin disrupts its association with F-actin, but does not affect its binding to PP1.

The protein resides in the cytoplasm. It localises to the cytoskeleton. Its subcellular location is the nucleus. The protein localises to the postsynaptic density. It is found in the cell junction. The protein resides in the adherens junction. It localises to the cell projection. Its subcellular location is the dendritic spine. The protein localises to the cell membrane. It is found in the lamellipodium. The protein resides in the filopodium. It localises to the ruffle membrane. Functionally, seems to act as a scaffold protein in multiple signaling pathways. Modulates excitatory synaptic transmission and dendritic spine morphology. Binds to actin filaments (F-actin) and shows cross-linking activity. Binds along the sides of the F-actin. May play an important role in linking the actin cytoskeleton to the plasma membrane at the synaptic junction. Believed to target protein phosphatase 1/PP1 to dendritic spines, which are rich in F-actin, and regulates its specificity toward ion channels and other substrates, such as AMPA-type and NMDA-type glutamate receptors. Plays a role in regulation of G-protein coupled receptor signaling, including dopamine D2 receptors and alpha-adrenergic receptors. May establish a signaling complex for dopaminergic neurotransmission through D2 receptors by linking receptors downstream signaling molecules and the actin cytoskeleton. Binds to ADRA1B and RGS2 and mediates regulation of ADRA1B signaling. May confer to Rac signaling specificity by binding to both, RacGEFs and Rac effector proteins. Probably regulates p70 S6 kinase activity by forming a complex with TIAM1. Required for hepatocyte growth factor (HGF)-induced cell migration. The polypeptide is Neurabin-2 (Ppp1r9b) (Mus musculus (Mouse)).